The sequence spans 428 residues: 3-phosphoshikimate 1-carboxyvinyltransferase (428 aa).

Residues K20, S21, and R25 each coordinate 3-phosphoshikimate. K20 provides a ligand contact to phosphoenolpyruvate. The phosphoenolpyruvate site is built by G93 and R122. 3-phosphoshikimate contacts are provided by S167, Q169, D317, and K344. Q169 provides a ligand contact to phosphoenolpyruvate. D317 (proton acceptor) is an active-site residue. The phosphoenolpyruvate site is built by R348 and R390.

The protein belongs to the EPSP synthase family. Monomer.

The protein resides in the cytoplasm. The enzyme catalyses 3-phosphoshikimate + phosphoenolpyruvate = 5-O-(1-carboxyvinyl)-3-phosphoshikimate + phosphate. The protein operates within metabolic intermediate biosynthesis; chorismate biosynthesis; chorismate from D-erythrose 4-phosphate and phosphoenolpyruvate: step 6/7. Its function is as follows. Catalyzes the transfer of the enolpyruvyl moiety of phosphoenolpyruvate (PEP) to the 5-hydroxyl of shikimate-3-phosphate (S3P) to produce enolpyruvyl shikimate-3-phosphate and inorganic phosphate. In Leptospira biflexa serovar Patoc (strain Patoc 1 / ATCC 23582 / Paris), this protein is 3-phosphoshikimate 1-carboxyvinyltransferase.